A 410-amino-acid chain; its full sequence is Peptidase T (410 aa).

Histidine 79 is a binding site for Zn(2+). The active site involves aspartate 81. Aspartate 142 contacts Zn(2+). Glutamate 176 functions as the Proton acceptor in the catalytic mechanism. Glutamate 177, aspartate 199, and histidine 381 together coordinate Zn(2+).

Belongs to the peptidase M20B family. Zn(2+) is required as a cofactor.

It is found in the cytoplasm. It catalyses the reaction Release of the N-terminal residue from a tripeptide.. Cleaves the N-terminal amino acid of tripeptides. This is Peptidase T from Bacillus pumilus (strain SAFR-032).